The following is a 356-amino-acid chain: Heat-inducible transcription repressor HrcA (356 aa).

Belongs to the HrcA family.

Its function is as follows. Negative regulator of class I heat shock genes (grpE-dnaK-dnaJ and groELS operons). Prevents heat-shock induction of these operons. The polypeptide is Heat-inducible transcription repressor HrcA (Chlorobaculum parvum (strain DSM 263 / NCIMB 8327) (Chlorobium vibrioforme subsp. thiosulfatophilum)).